The chain runs to 228 residues: PKHD-type hydroxylase RPE_4577 (228 aa).

One can recognise a Fe2OG dioxygenase domain in the interval 78-180 (TIFPPLFNRY…RIASFFWTQS (103 aa)). Histidine 98, aspartate 100, and histidine 161 together coordinate Fe cation. Residue arginine 171 participates in 2-oxoglutarate binding.

Fe(2+) is required as a cofactor. L-ascorbate serves as cofactor.

This Rhodopseudomonas palustris (strain BisA53) protein is PKHD-type hydroxylase RPE_4577.